A 66-amino-acid chain; its full sequence is Phylloseptin-H8 (66 aa).

Residues 1–22 (MAFLKKSLFLVLFLGLVSLSIC) form the signal peptide. A propeptide spanning residues 23-44 (EEEKRETEEEENDQEEDDKSEE) is cleaved from the precursor. The tract at residues 25–44 (EKRETEEEENDQEEDDKSEE) is disordered. The segment covering 30–41 (EEEENDQEEDDK) has biased composition (acidic residues). Leucine 65 is modified (leucine amide).

Expressed by the skin glands.

It is found in the secreted. Has antimicrobial activity. The sequence is that of Phylloseptin-H8 from Pithecopus hypochondrialis (Orange-legged leaf frog).